A 211-amino-acid polypeptide reads, in one-letter code: Thymidylate kinase (211 aa).

Position 7–14 (7–14 (GIDGCGKT)) interacts with ATP.

It belongs to the thymidylate kinase family.

The catalysed reaction is dTMP + ATP = dTDP + ADP. Its function is as follows. Phosphorylation of dTMP to form dTDP in both de novo and salvage pathways of dTTP synthesis. This chain is Thymidylate kinase, found in Anaplasma marginale (strain St. Maries).